Reading from the N-terminus, the 90-residue chain is ESAT-6-like protein EsxE (90 aa).

Belongs to the WXG100 family. ESAT-6 subfamily.

The protein localises to the secreted. The sequence is that of ESAT-6-like protein EsxE from Mycobacterium tuberculosis (strain CDC 1551 / Oshkosh).